A 119-amino-acid chain; its full sequence is NAD(P)H-quinone oxidoreductase subunit M (119 aa).

Belongs to the complex I NdhM subunit family. In terms of assembly, NDH-1 can be composed of about 15 different subunits; different subcomplexes with different compositions have been identified which probably have different functions.

Its subcellular location is the cell inner membrane. The enzyme catalyses a plastoquinone + NADH + (n+1) H(+)(in) = a plastoquinol + NAD(+) + n H(+)(out). It catalyses the reaction a plastoquinone + NADPH + (n+1) H(+)(in) = a plastoquinol + NADP(+) + n H(+)(out). Functionally, NDH-1 shuttles electrons from an unknown electron donor, via FMN and iron-sulfur (Fe-S) centers, to quinones in the respiratory and/or the photosynthetic chain. The immediate electron acceptor for the enzyme in this species is believed to be plastoquinone. Couples the redox reaction to proton translocation, and thus conserves the redox energy in a proton gradient. Cyanobacterial NDH-1 also plays a role in inorganic carbon-concentration. The polypeptide is NAD(P)H-quinone oxidoreductase subunit M (Gloeobacter violaceus (strain ATCC 29082 / PCC 7421)).